Reading from the N-terminus, the 630-residue chain is Adagio-like protein 1 (630 aa).

Positions 1–36 (MEWDSESDGAGSIGAGEEEEEEEEEEEGGFGGGGGG) are disordered. The segment covering 16-28 (GEEEEEEEEEEEG) has biased composition (acidic residues). Residues 48-127 (IEGMLRASGP…SEIRKCIDNG (80 aa)) enclose the PAS domain. S-4a-FMN cysteine is present on Cys95. In terms of domain architecture, F-box spans 216-262 (SSLFQLTDEVLCQSILSRLSPRDIASVSSVCRRLYLLTRNEDLWRMV). Kelch repeat units lie at residues 378 to 428 (LLVV…TLDG), 430 to 481 (KLVV…VYGG), 483 to 535 (KILM…AGPP), and 549 to 601 (RVLI…VVGG).

The protein belongs to the ADAGIO family. FMN binds covalently to cysteine after exposure to blue light and is reversed in the dark.

The protein resides in the nucleus. The protein operates within protein modification; protein ubiquitination. Component of an E3 ubiquitin ligase complex that plays a central role in blue light-dependent circadian cycles. Acts as a blue light photoreceptor, due to the presence of FMN, that mediates light-regulated protein degradation of critical clock components by targeting them to the proteasome complex. In Oryza sativa subsp. japonica (Rice), this protein is Adagio-like protein 1.